Here is a 77-residue protein sequence, read N- to C-terminus: Vacuolar ATPase assembly integral membrane protein VMA21 (77 aa).

Residues 1 to 8 are Cytoplasmic-facing; it reads MAVDVPTS. Residues 9–29 traverse the membrane as a helical segment; that stretch reads VIVKLMFFTLAMVSFPVLTFF. Topologically, residues 30–41 are lumenal; sequence VSQQYTSNTLVN. The chain crosses the membrane as a helical span at residues 42–62; that stretch reads GGLAALAANVVLFAYVIMAFS. Over 63–77 the chain is Cytoplasmic; it reads EDVPQSDGKESKKQQ. The Prevents secretion from ER signature appears at 74-77; it reads KKQQ.

This sequence belongs to the VMA21 family.

The protein resides in the endoplasmic reticulum membrane. It localises to the endoplasmic reticulum-Golgi intermediate compartment membrane. It is found in the cytoplasmic vesicle. Its subcellular location is the COPII-coated vesicle membrane. Functionally, required for the assembly of the V0 complex of the vacuolar ATPase (V-ATPase) in the endoplasmic reticulum. The chain is Vacuolar ATPase assembly integral membrane protein VMA21 from Eremothecium gossypii (strain ATCC 10895 / CBS 109.51 / FGSC 9923 / NRRL Y-1056) (Yeast).